The chain runs to 105 residues: Thioredoxin (105 aa).

Residues 2–103 form the Thioredoxin domain; that stretch reads VKQIESKSAF…KEKLEATIKG (102 aa). The residue at position 3 (Lys3) is an N6-acetyllysine. The residue at position 8 (Lys8) is an N6-succinyllysine. Active-site nucleophile residues include Cys32 and Cys35. A disulfide bond links Cys32 and Cys35. Lys39 is subject to N6-acetyllysine. 2 positions are modified to S-nitrosocysteine: Cys62 and Cys69. An S-nitrosocysteine; alternate modification is found at Cys73. The residue at position 94 (Lys94) is an N6-acetyllysine; alternate. Lys94 carries the post-translational modification N6-succinyllysine; alternate.

This sequence belongs to the thioredoxin family. As to quaternary structure, homodimer; disulfide-linked. Interacts with TXNIP through the redox-active site. Interacts with MAP3K5 and CASP3. Interacts with APEX1; the interaction stimulates the FOS/JUN AP-1 DNA-binding activity in a redox-dependent manner. In the fully reduced protein, both Cys-69 and Cys-73 are nitrosylated in response to nitric oxide (NO). When two disulfide bonds are present in the protein, only Cys-73 is nitrosylated. Cys-73 can serve as donor for nitrosylation of target proteins.

Its subcellular location is the nucleus. It localises to the cytoplasm. The protein resides in the secreted. Functionally, participates in various redox reactions through the reversible oxidation of its active center dithiol to a disulfide and catalyzes dithiol-disulfide exchange reactions. Plays a role in the reversible S-nitrosylation of cysteine residues in target proteins, and thereby contributes to the response to intracellular nitric oxide. Nitrosylates the active site Cys of CASP3 in response to nitric oxide (NO), and thereby inhibits caspase-3 activity. Induces the FOS/JUN AP-1 DNA binding activity in ionizing radiation (IR) cells through its oxidation/reduction status and stimulates AP-1 transcriptional activity. This chain is Thioredoxin (TXN), found in Equus caballus (Horse).